A 199-amino-acid chain; its full sequence is Superoxide dismutase [Mn] 2 (199 aa).

Mn(2+)-binding residues include His28, His75, Asp157, and His161.

The protein belongs to the iron/manganese superoxide dismutase family. Mn(2+) serves as cofactor.

It carries out the reaction 2 superoxide + 2 H(+) = H2O2 + O2. In terms of biological role, destroys superoxide anion radicals which are normally produced within the cells and which are toxic to biological systems. The protein is Superoxide dismutase [Mn] 2 (sod2) of Haloferax volcanii (strain ATCC 29605 / DSM 3757 / JCM 8879 / NBRC 14742 / NCIMB 2012 / VKM B-1768 / DS2) (Halobacterium volcanii).